Consider the following 692-residue polypeptide: Polyribonucleotide nucleotidyltransferase (692 aa).

2 residues coordinate Mg(2+): aspartate 484 and aspartate 490. Positions 551-614 constitute a KH domain; the sequence is PKYFIHKISQ…ALVERVKSIT (64 aa). Residues 620 to 688 enclose the S1 motif domain; the sequence is GAVYTGKVKT…NRGRIRLSRK (69 aa).

It belongs to the polyribonucleotide nucleotidyltransferase family. Mg(2+) is required as a cofactor.

The protein resides in the cytoplasm. It catalyses the reaction RNA(n+1) + phosphate = RNA(n) + a ribonucleoside 5'-diphosphate. In terms of biological role, involved in mRNA degradation. Catalyzes the phosphorolysis of single-stranded polyribonucleotides processively in the 3'- to 5'-direction. The sequence is that of Polyribonucleotide nucleotidyltransferase from Desulfotalea psychrophila (strain LSv54 / DSM 12343).